The following is a 186-amino-acid chain: dITP/XTP pyrophosphatase (186 aa).

7-12 (TSNPGK) is a substrate binding site. 2 residues coordinate Mg(2+): E36 and D65. D65 serves as the catalytic Proton acceptor. Substrate contacts are provided by residues S66, 140-143 (FGYD), K163, and 168-169 (HR).

It belongs to the HAM1 NTPase family. As to quaternary structure, homodimer. The cofactor is Mg(2+). It depends on Mn(2+) as a cofactor.

It catalyses the reaction XTP + H2O = XMP + diphosphate + H(+). The enzyme catalyses dITP + H2O = dIMP + diphosphate + H(+). It carries out the reaction ITP + H2O = IMP + diphosphate + H(+). Pyrophosphatase that catalyzes the hydrolysis of nucleoside triphosphates to their monophosphate derivatives, with a high preference for the non-canonical purine nucleotides XTP (xanthosine triphosphate), dITP (deoxyinosine triphosphate) and ITP. Seems to function as a house-cleaning enzyme that removes non-canonical purine nucleotides from the nucleotide pool, thus preventing their incorporation into DNA/RNA and avoiding chromosomal lesions. This is dITP/XTP pyrophosphatase from Pyrococcus horikoshii (strain ATCC 700860 / DSM 12428 / JCM 9974 / NBRC 100139 / OT-3).